We begin with the raw amino-acid sequence, 426 residues long: Kynureninase (426 aa).

Pyridoxal 5'-phosphate is bound by residues L110, S111, 138 to 141, D223, H226, and Y248; that span reads FPSD. An N6-(pyridoxal phosphate)lysine modification is found at K249. W279 and N307 together coordinate pyridoxal 5'-phosphate.

The protein belongs to the kynureninase family. Homodimer. It depends on pyridoxal 5'-phosphate as a cofactor.

It catalyses the reaction L-kynurenine + H2O = anthranilate + L-alanine + H(+). The catalysed reaction is 3-hydroxy-L-kynurenine + H2O = 3-hydroxyanthranilate + L-alanine + H(+). It participates in amino-acid degradation; L-kynurenine degradation; L-alanine and anthranilate from L-kynurenine: step 1/1. It functions in the pathway cofactor biosynthesis; NAD(+) biosynthesis; quinolinate from L-kynurenine: step 2/3. Its function is as follows. Catalyzes the cleavage of L-kynurenine (L-Kyn) and L-3-hydroxykynurenine (L-3OHKyn) into anthranilic acid (AA) and 3-hydroxyanthranilic acid (3-OHAA), respectively. This chain is Kynureninase, found in Myxococcus xanthus (strain DK1622).